Consider the following 199-residue polypeptide: Holliday junction branch migration complex subunit RuvA (199 aa).

Residues 1 to 63 form a domain I region; sequence MIGCLIGEVF…EDAQQLYGFS (63 aa). Residues 64–142 form a domain II region; the sequence is DAQEKTIFRT…TLAQGTSSAA (79 aa). Positions 143-150 are flexible linker; it reads ALPQIQFV. Residues 150–199 form a domain III region; that stretch reads VSNSPVAEAEAALQSLGYKPLEAQKAVAAVKADYTESADIIRAALKSMMK.

The protein belongs to the RuvA family. Homotetramer. Forms an RuvA(8)-RuvB(12)-Holliday junction (HJ) complex. HJ DNA is sandwiched between 2 RuvA tetramers; dsDNA enters through RuvA and exits via RuvB. An RuvB hexamer assembles on each DNA strand where it exits the tetramer. Each RuvB hexamer is contacted by two RuvA subunits (via domain III) on 2 adjacent RuvB subunits; this complex drives branch migration. In the full resolvosome a probable DNA-RuvA(4)-RuvB(12)-RuvC(2) complex forms which resolves the HJ.

Its subcellular location is the cytoplasm. Functionally, the RuvA-RuvB-RuvC complex processes Holliday junction (HJ) DNA during genetic recombination and DNA repair, while the RuvA-RuvB complex plays an important role in the rescue of blocked DNA replication forks via replication fork reversal (RFR). RuvA specifically binds to HJ cruciform DNA, conferring on it an open structure. The RuvB hexamer acts as an ATP-dependent pump, pulling dsDNA into and through the RuvAB complex. HJ branch migration allows RuvC to scan DNA until it finds its consensus sequence, where it cleaves and resolves the cruciform DNA. The chain is Holliday junction branch migration complex subunit RuvA from Acinetobacter baumannii (strain SDF).